A 387-amino-acid polypeptide reads, in one-letter code: Phosphoglycerate kinase (387 aa).

Substrate contacts are provided by residues 21-23 (DLN), Arg-36, and 59-62 (HLGR). Lys-84 carries the post-translational modification N6-acetyllysine. Positions 113 and 146 each coordinate substrate. ATP is bound by residues Lys-197, Glu-314, and 340-343 (GGDT).

This sequence belongs to the phosphoglycerate kinase family. As to quaternary structure, monomer.

Its subcellular location is the cytoplasm. The enzyme catalyses (2R)-3-phosphoglycerate + ATP = (2R)-3-phospho-glyceroyl phosphate + ADP. The protein operates within carbohydrate degradation; glycolysis; pyruvate from D-glyceraldehyde 3-phosphate: step 2/5. The chain is Phosphoglycerate kinase from Escherichia coli O9:H4 (strain HS).